We begin with the raw amino-acid sequence, 221 residues long: Josephin-like protein (221 aa).

The segment at 1 to 37 (MESPSARTLGNSLGDDSGNGNENGNGSGNGNTTMMPH) is disordered. Positions 9-20 (LGNSLGDDSGNG) are enriched in low complexity. A Josephin domain is found at 36 to 214 (PHGIYHERQT…DCKDKSQQRW (179 aa)). Cys-49 (nucleophile) is an active-site residue. Catalysis depends on His-152, which acts as the Proton acceptor.

It catalyses the reaction Thiol-dependent hydrolysis of ester, thioester, amide, peptide and isopeptide bonds formed by the C-terminal Gly of ubiquitin (a 76-residue protein attached to proteins as an intracellular targeting signal).. May act as a deubiquitinating enzyme. This is Josephin-like protein from Drosophila melanogaster (Fruit fly).